An 83-amino-acid chain; its full sequence is UPF0297 protein Moth_1643 (83 aa).

Belongs to the UPF0297 family.

The protein is UPF0297 protein Moth_1643 of Moorella thermoacetica (strain ATCC 39073 / JCM 9320).